The sequence spans 191 residues: Peptidyl-tRNA hydrolase (191 aa).

Tyr17 is a tRNA binding site. Catalysis depends on His22, which acts as the Proton acceptor. TRNA-binding residues include Tyr68, Asn70, and Asn116.

This sequence belongs to the PTH family. Monomer.

It is found in the cytoplasm. It carries out the reaction an N-acyl-L-alpha-aminoacyl-tRNA + H2O = an N-acyl-L-amino acid + a tRNA + H(+). Functionally, hydrolyzes ribosome-free peptidyl-tRNAs (with 1 or more amino acids incorporated), which drop off the ribosome during protein synthesis, or as a result of ribosome stalling. Its function is as follows. Catalyzes the release of premature peptidyl moieties from peptidyl-tRNA molecules trapped in stalled 50S ribosomal subunits, and thus maintains levels of free tRNAs and 50S ribosomes. The sequence is that of Peptidyl-tRNA hydrolase from Mycobacterium ulcerans (strain Agy99).